A 556-amino-acid chain; its full sequence is Formate--tetrahydrofolate ligase (556 aa).

65–72 (TPAGEGKT) contributes to the ATP binding site.

It belongs to the formate--tetrahydrofolate ligase family.

The enzyme catalyses (6S)-5,6,7,8-tetrahydrofolate + formate + ATP = (6R)-10-formyltetrahydrofolate + ADP + phosphate. It participates in one-carbon metabolism; tetrahydrofolate interconversion. This Carboxydothermus hydrogenoformans (strain ATCC BAA-161 / DSM 6008 / Z-2901) protein is Formate--tetrahydrofolate ligase.